A 206-amino-acid polypeptide reads, in one-letter code: Ribosomal RNA large subunit methyltransferase E (206 aa).

Positions 60, 62, 80, 96, and 121 each coordinate S-adenosyl-L-methionine. Lysine 161 functions as the Proton acceptor in the catalytic mechanism.

Belongs to the class I-like SAM-binding methyltransferase superfamily. RNA methyltransferase RlmE family.

The protein localises to the cytoplasm. It carries out the reaction uridine(2552) in 23S rRNA + S-adenosyl-L-methionine = 2'-O-methyluridine(2552) in 23S rRNA + S-adenosyl-L-homocysteine + H(+). Specifically methylates the uridine in position 2552 of 23S rRNA at the 2'-O position of the ribose in the fully assembled 50S ribosomal subunit. The polypeptide is Ribosomal RNA large subunit methyltransferase E (Hahella chejuensis (strain KCTC 2396)).